A 229-amino-acid polypeptide reads, in one-letter code: General odorant-binding protein 69 (229 aa).

Positions 1 to 20 are cleaved as a signal peptide; it reads MDRLLLVLLSSASLLLTVYG. A disulfide bridge connects residues Cys-66 and Cys-106.

It belongs to the PBP/GOBP family.

Its subcellular location is the secreted. In terms of biological role, present in the aqueous fluid surrounding olfactory sensory dendrites and are thought to aid in the capture and transport of hydrophobic odorants into and through this fluid. This Anopheles gambiae (African malaria mosquito) protein is General odorant-binding protein 69 (Obp69).